A 554-amino-acid chain; its full sequence is Carboxypeptidase Y homolog A (554 aa).

The first 17 residues, Met-1–Ser-17, serve as a signal peptide directing secretion. The propeptide occupies Ala-18 to Lys-137. Cystine bridges form between Cys-191–Cys-431, Cys-325–Cys-339, Cys-349–Cys-372, Cys-356–Cys-365, and Cys-394–Cys-401. An N-linked (GlcNAc...) asparagine glycan is attached at Asn-222. Ser-278 is an active-site residue. The active site involves Asp-470. N-linked (GlcNAc...) asparagine glycosylation is present at Asn-518. Residue His-529 is part of the active site.

Belongs to the peptidase S10 family.

The protein resides in the vacuole. The enzyme catalyses Release of a C-terminal amino acid with broad specificity.. Vacuolar carboxypeptidase involved in degradation of small peptides. Digests preferentially peptides containing an aliphatic or hydrophobic residue in P1' position, as well as methionine, leucine or phenylalanine in P1 position of ester substrate. The sequence is that of Carboxypeptidase Y homolog A (CPYA) from Sordaria macrospora (strain ATCC MYA-333 / DSM 997 / K(L3346) / K-hell).